The chain runs to 200 residues: Probable GTP-binding protein EngB (200 aa).

One can recognise an EngB-type G domain in the interval 26-200 (SIPEIAIAGR…IYEIAQCIKK (175 aa)). GTP-binding positions include 34 to 41 (GRSNVGKS), 61 to 65 (GCTKQ), 80 to 83 (DLPG), 147 to 150 (TKID), and 179 to 181 (TSS). The Mg(2+) site is built by S41 and T63.

It belongs to the TRAFAC class TrmE-Era-EngA-EngB-Septin-like GTPase superfamily. EngB GTPase family. It depends on Mg(2+) as a cofactor.

Necessary for normal cell division and for the maintenance of normal septation. The polypeptide is Probable GTP-binding protein EngB (Ehrlichia chaffeensis (strain ATCC CRL-10679 / Arkansas)).